The following is a 473-amino-acid chain: Gamma-aminobutyric acid receptor subunit beta-3 (473 aa).

Residues 1–25 (MWGLAGGRLFGIFSAPVLVAVVCCA) form the signal peptide. Over 26 to 246 (QSVNDPGNMS…FRLKRNIGYF (221 aa)) the chain is Extracellular. 2 N-linked (GlcNAc...) asparagine glycosylation sites follow: Asn33 and Asn105. 120 to 122 (DTY) serves as a coordination point for benzamidine. Tyr122 contributes to the 4-aminobutanoate binding site. Tyr122 lines the histamine pocket. Cys161 and Cys175 are disulfide-bonded. Asn174 carries an N-linked (GlcNAc...) asparagine glycan. 4-aminobutanoate contacts are provided by Glu180 and Tyr182. Residues 180–182 (ESY) and Phe225 each bind benzamidine. 181-182 (SY) contacts histamine. Thr227 contacts 4-aminobutanoate. Thr227 provides a ligand contact to histamine. A helical membrane pass occupies residues 247–267 (ILQTYMPSILITILSWVSFWI). Residues 268-271 (NYDA) lie on the Cytoplasmic side of the membrane. The chain crosses the membrane as a helical span at residues 272–292 (SAARVALGITTVLTMTTINTH). The Extracellular segment spans residues 293–304 (LRETLPKIPYVK). The chain crosses the membrane as a helical span at residues 305 to 328 (AIDMYLMGCFVFVFLALLEYAFVN). Topologically, residues 329–447 (YIFFGRGPQR…KIPDLTDVNA (119 aa)) are cytoplasmic. A helical transmembrane segment spans residues 448–470 (IDRWSRIVFPFTFSLFNLVYWLY). The Extracellular segment spans residues 471-473 (YVN).

Belongs to the ligand-gated ion channel (TC 1.A.9) family. Gamma-aminobutyric acid receptor (TC 1.A.9.5) subfamily. GABRB3 sub-subfamily. In terms of assembly, heteropentamer, formed by a combination of alpha (GABRA1-6), beta (GABRB1-3), gamma (GABRG1-3), delta (GABRD), epsilon (GABRE), rho (GABRR1-3), pi (GABRP) and theta (GABRQ) chains, each subunit exhibiting distinct physiological and pharmacological properties. Can form functional homopentamers (in vitro). Interacts with UBQLN1. May interact with KIF21B. Identified in a complex of 720 kDa composed of LHFPL4, NLGN2, GABRA1, GABRB2, GABRG2 and GABRB3. Interacts with LHFPL4. Interacts with GIT1; this interaction is required for synaptic GABRB3 surface stability and inhibitory synapse strength.

It localises to the postsynaptic cell membrane. Its subcellular location is the cell membrane. It is found in the cytoplasmic vesicle membrane. The catalysed reaction is chloride(in) = chloride(out). With respect to regulation, potentiated by histamine. Functionally, beta subunit of the heteropentameric ligand-gated chloride channel gated by gamma-aminobutyric acid (GABA), a major inhibitory neurotransmitter in the brain. GABA-gated chloride channels, also named GABA(A) receptors (GABAAR), consist of five subunits arranged around a central pore and contain GABA active binding site(s) located at the alpha and beta subunit interface(s). GABAARs containing beta-3/GABRB3 subunit are found at both synaptic and extrasynaptic sites. When activated by GABA, GABAARs selectively allow the flow of chloride anions across the cell membrane down their electrochemical gradient. Chloride influx into the postsynaptic neuron following GABAAR opening decreases the neuron ability to generate a new action potential, thereby reducing nerve transmission. GABAARs containing alpha-1 and beta-3 subunits exhibit synaptogenic activity; the gamma-2 subunit being necessary but not sufficient to induce rapid synaptic contacts formation. Extrasynaptic beta-3 receptors contribute to the tonic GABAergic inhibition. GABAARs containing alpha-1, beta-3 and epsilon subunits may also permit spontaneous chloride channel activity while preserving the structural information required for GABA-gated openings. Beta-containing GABAARs can simultaneously bind GABA and histamine where histamine binds at the interface of two neighboring beta subunits, which may be involved in the regulation of sleep and wakefulness. Plays an important role in somatosensation and in the production of antinociception. This is Gamma-aminobutyric acid receptor subunit beta-3 from Homo sapiens (Human).